Here is a 99-residue protein sequence, read N- to C-terminus: Aspartyl/glutamyl-tRNA(Asn/Gln) amidotransferase subunit C (99 aa).

It belongs to the GatC family. Heterotrimer of A, B and C subunits.

The enzyme catalyses L-glutamyl-tRNA(Gln) + L-glutamine + ATP + H2O = L-glutaminyl-tRNA(Gln) + L-glutamate + ADP + phosphate + H(+). It catalyses the reaction L-aspartyl-tRNA(Asn) + L-glutamine + ATP + H2O = L-asparaginyl-tRNA(Asn) + L-glutamate + ADP + phosphate + 2 H(+). Allows the formation of correctly charged Asn-tRNA(Asn) or Gln-tRNA(Gln) through the transamidation of misacylated Asp-tRNA(Asn) or Glu-tRNA(Gln) in organisms which lack either or both of asparaginyl-tRNA or glutaminyl-tRNA synthetases. The reaction takes place in the presence of glutamine and ATP through an activated phospho-Asp-tRNA(Asn) or phospho-Glu-tRNA(Gln). This chain is Aspartyl/glutamyl-tRNA(Asn/Gln) amidotransferase subunit C, found in Mycobacterium marinum (strain ATCC BAA-535 / M).